A 419-amino-acid polypeptide reads, in one-letter code: Putative nucleobase-ascorbate transporter 9 (419 aa).

The segment covering 1 to 22 (MANGAGNGGGGAGGNGGGGNNG) has biased composition (gly residues). Residues 1–28 (MANGAGNGGGGAGGNGGGGNNGAGNRAE) form a disordered region. 10 helical membrane-spanning segments follow: residues 64-84 (LLSL…MGGG), 91-111 (VIQT…FFGT), 113-133 (LPVI…IIYS), 153-173 (IQGA…LGVW), 184-204 (SIAP…FPLV), 220-240 (GMML…SSGV), 273-293 (SFAM…LFYA), 313-333 (RVIQ…KFGA), 334-354 (FFAS…LCFV), and 370-390 (FNTK…PQYF).

It belongs to the nucleobase:cation symporter-2 (NCS2) (TC 2.A.40) family.

It localises to the membrane. This chain is Putative nucleobase-ascorbate transporter 9 (NAT9), found in Arabidopsis thaliana (Mouse-ear cress).